The chain runs to 396 residues: Deoxyguanosinetriphosphate triphosphohydrolase-like protein (396 aa).

An HD domain is found at 62 to 198 (RLTHSLEVAQ…AALADDIAYN (137 aa)).

It belongs to the dGTPase family. Type 2 subfamily.

The sequence is that of Deoxyguanosinetriphosphate triphosphohydrolase-like protein from Jannaschia sp. (strain CCS1).